Consider the following 194-residue polypeptide: Fimbrial protein 987P (194 aa).

Positions 1-23 (MRMKKSALTLAVLSSLFSGYSLA) are cleaved as a signal peptide. The cysteines at positions 46 and 85 are disulfide-linked.

It belongs to the fimbrial protein family.

Its subcellular location is the fimbrium. This Escherichia coli protein is Fimbrial protein 987P (fasA).